A 278-amino-acid polypeptide reads, in one-letter code: Tryptophan synthase alpha chain (278 aa).

Active-site proton acceptor residues include Glu-50 and Asp-61.

It belongs to the TrpA family. As to quaternary structure, tetramer of two alpha and two beta chains.

It catalyses the reaction (1S,2R)-1-C-(indol-3-yl)glycerol 3-phosphate + L-serine = D-glyceraldehyde 3-phosphate + L-tryptophan + H2O. It participates in amino-acid biosynthesis; L-tryptophan biosynthesis; L-tryptophan from chorismate: step 5/5. Functionally, the alpha subunit is responsible for the aldol cleavage of indoleglycerol phosphate to indole and glyceraldehyde 3-phosphate. The protein is Tryptophan synthase alpha chain of Rhodopseudomonas palustris (strain ATCC BAA-98 / CGA009).